Reading from the N-terminus, the 232-residue chain is 5'-methylthioadenosine/S-adenosylhomocysteine nucleosidase (232 aa).

E14 (proton acceptor) is an active-site residue. Residues G80, V154, and 175–176 contribute to the substrate site; that span reads ME. D199 (proton donor) is an active-site residue.

The protein belongs to the PNP/UDP phosphorylase family. MtnN subfamily.

The catalysed reaction is S-adenosyl-L-homocysteine + H2O = S-(5-deoxy-D-ribos-5-yl)-L-homocysteine + adenine. It catalyses the reaction S-methyl-5'-thioadenosine + H2O = 5-(methylsulfanyl)-D-ribose + adenine. It carries out the reaction 5'-deoxyadenosine + H2O = 5-deoxy-D-ribose + adenine. Its pathway is amino-acid biosynthesis; L-methionine biosynthesis via salvage pathway; S-methyl-5-thio-alpha-D-ribose 1-phosphate from S-methyl-5'-thioadenosine (hydrolase route): step 1/2. Catalyzes the irreversible cleavage of the glycosidic bond in both 5'-methylthioadenosine (MTA) and S-adenosylhomocysteine (SAH/AdoHcy) to adenine and the corresponding thioribose, 5'-methylthioribose and S-ribosylhomocysteine, respectively. Also cleaves 5'-deoxyadenosine, a toxic by-product of radical S-adenosylmethionine (SAM) enzymes, into 5-deoxyribose and adenine. This chain is 5'-methylthioadenosine/S-adenosylhomocysteine nucleosidase, found in Haemophilus ducreyi (strain 35000HP / ATCC 700724).